The primary structure comprises 946 residues: DNA primase (946 aa).

The tract at residues R596–T626 is disordered. A compositionally biased stretch (polar residues) spans F617–T626. The CHC2-type zinc finger occupies C881–C920.

The protein belongs to the herpesviridae DNA primase family. As to quaternary structure, associates with the helicase and the primase-associated factor to form the helicase-primase factor.

The protein resides in the host nucleus. Essential component of the helicase/primase complex. Unwinds the DNA at the replication forks and generates single-stranded DNA for both leading and lagging strand synthesis. The primase initiates primer synthesis and thereby produces large amount of short RNA primers on the lagging strand that the polymerase elongates using dNTPs. The sequence is that of DNA primase (UL70) from Human cytomegalovirus (strain Merlin) (HHV-5).